We begin with the raw amino-acid sequence, 240 residues long: tRNA (guanine-N(1)-)-methyltransferase (240 aa).

S-adenosyl-L-methionine contacts are provided by residues G112 and 132 to 137 (LGDFVL).

Belongs to the RNA methyltransferase TrmD family. Homodimer.

The protein resides in the cytoplasm. The catalysed reaction is guanosine(37) in tRNA + S-adenosyl-L-methionine = N(1)-methylguanosine(37) in tRNA + S-adenosyl-L-homocysteine + H(+). Functionally, specifically methylates guanosine-37 in various tRNAs. The chain is tRNA (guanine-N(1)-)-methyltransferase from Cyanothece sp. (strain PCC 7425 / ATCC 29141).